Consider the following 444-residue polypeptide: ATP-dependent protease ATPase subunit HslU (444 aa).

ATP-binding positions include isoleucine 18 and 60-65; that span reads GVGKTE. The tract at residues 143–163 is disordered; sequence WGEVESHDSHSSTRQAFRKKL. Aspartate 257, glutamate 322, and arginine 394 together coordinate ATP.

The protein belongs to the ClpX chaperone family. HslU subfamily. As to quaternary structure, a double ring-shaped homohexamer of HslV is capped on each side by a ring-shaped HslU homohexamer. The assembly of the HslU/HslV complex is dependent on binding of ATP.

It is found in the cytoplasm. Functionally, ATPase subunit of a proteasome-like degradation complex; this subunit has chaperone activity. The binding of ATP and its subsequent hydrolysis by HslU are essential for unfolding of protein substrates subsequently hydrolyzed by HslV. HslU recognizes the N-terminal part of its protein substrates and unfolds these before they are guided to HslV for hydrolysis. The sequence is that of ATP-dependent protease ATPase subunit HslU from Haemophilus influenzae (strain PittEE).